A 164-amino-acid polypeptide reads, in one-letter code: Nucleotide-binding protein Mfla_1706 (164 aa).

It belongs to the YajQ family.

Functionally, nucleotide-binding protein. This is Nucleotide-binding protein Mfla_1706 from Methylobacillus flagellatus (strain ATCC 51484 / DSM 6875 / VKM B-1610 / KT).